The chain runs to 464 residues: Fumarate hydratase class II (464 aa).

Substrate contacts are provided by residues 96–98 (SGT), 127–130 (HPND), 137–139 (SSN), and Thr185. The Proton donor/acceptor role is filled by His186. Ser316 is an active-site residue. Residues Ser317 and 322–324 (KVN) contribute to the substrate site.

Belongs to the class-II fumarase/aspartase family. Fumarase subfamily. As to quaternary structure, homotetramer.

Its subcellular location is the cytoplasm. It carries out the reaction (S)-malate = fumarate + H2O. The protein operates within carbohydrate metabolism; tricarboxylic acid cycle; (S)-malate from fumarate: step 1/1. Functionally, involved in the TCA cycle. Catalyzes the stereospecific interconversion of fumarate to L-malate. In Pseudomonas putida (strain ATCC 47054 / DSM 6125 / CFBP 8728 / NCIMB 11950 / KT2440), this protein is Fumarate hydratase class II.